We begin with the raw amino-acid sequence, 951 residues long: 2-oxoglutarate dehydrogenase E1 component (951 aa).

The segment at 906 to 925 (RRRRSSPAEGNPTAHKQEQA) is disordered.

Belongs to the alpha-ketoglutarate dehydrogenase family. In terms of assembly, homodimer. Part of the 2-oxoglutarate dehydrogenase (OGDH) complex composed of E1 (2-oxoglutarate dehydrogenase), E2 (dihydrolipoamide succinyltransferase) and E3 (dihydrolipoamide dehydrogenase); the complex contains multiple copies of the three enzymatic components (E1, E2 and E3). It depends on thiamine diphosphate as a cofactor.

It catalyses the reaction N(6)-[(R)-lipoyl]-L-lysyl-[protein] + 2-oxoglutarate + H(+) = N(6)-[(R)-S(8)-succinyldihydrolipoyl]-L-lysyl-[protein] + CO2. Its function is as follows. E1 component of the 2-oxoglutarate dehydrogenase (OGDH) complex which catalyzes the decarboxylation of 2-oxoglutarate, the first step in the conversion of 2-oxoglutarate to succinyl-CoA and CO(2). The sequence is that of 2-oxoglutarate dehydrogenase E1 component from Exiguobacterium sp. (strain ATCC BAA-1283 / AT1b).